A 540-amino-acid polypeptide reads, in one-letter code: Chaperonin GroEL 3 (540 aa).

Residues 30 to 33 (TLGP), K51, 87 to 91 (DGTTT), G415, 479 to 481 (NAA), and D495 each bind ATP.

This sequence belongs to the chaperonin (HSP60) family. Forms a cylinder of 14 subunits composed of two heptameric rings stacked back-to-back. Interacts with the co-chaperonin GroES.

It is found in the cytoplasm. It carries out the reaction ATP + H2O + a folded polypeptide = ADP + phosphate + an unfolded polypeptide.. Its function is as follows. Together with its co-chaperonin GroES, plays an essential role in assisting protein folding. The GroEL-GroES system forms a nano-cage that allows encapsulation of the non-native substrate proteins and provides a physical environment optimized to promote and accelerate protein folding. The protein is Chaperonin GroEL 3 of Burkholderia ambifaria (strain ATCC BAA-244 / DSM 16087 / CCUG 44356 / LMG 19182 / AMMD) (Burkholderia cepacia (strain AMMD)).